The primary structure comprises 502 residues: MKVRTRIAPSPTGFPHVGTAYIALFNMCFAKQHGGEFILRIEDTDQLRSTPESEKMILDSLRWLGLNWSEGPDVGGPHAPYRQSERMGIYKQYALELVEKGHAFYCFATAEELDQMRAEQQARGETPKYDGRGLKLSQEEVARRLEAGEPHVIRMKVPEEGVCKFNDLLRGEVEIPWAQVDMQVLLKTDGLPTYHLANVVDDHLMEITHVLRGEEWLPSAPKHQLLYQYFGWEMPTLCHMPLLRNPDKSKLSKRKNPTSINYYRDIGVLPEALLNYLGRMGWSMPDEREVFTLQDMMDNFDIQRVSLGGPIFDVEKLNWLNGQWIKGLTPGQLLDRLLTWKSDRSTLEDIAAAIQPRINLLSEAVNWAGFYFNHMPQITAEMFESKKLTQEQVRQSLQFAIWRLESQFTWNNDTVGQTLMDLANQMGIKLRDFMPTFFIAIAGSTSSTPVMQSMVTLGPDLTFARLRHALEIVGAPSKKEVKNWEKLNESLKLPKNEATSEA.

A 'HIGH' region motif is present at residues 9–19; that stretch reads PSPTGFPHVGT. The short motif at 250–254 is the 'KMSKS' region element; the sequence is KLSKR. Residue K253 coordinates ATP.

The protein belongs to the class-I aminoacyl-tRNA synthetase family. Glutamate--tRNA ligase type 1 subfamily. As to quaternary structure, monomer.

Its subcellular location is the cytoplasm. The enzyme catalyses tRNA(Glu) + L-glutamate + ATP = L-glutamyl-tRNA(Glu) + AMP + diphosphate. In terms of biological role, catalyzes the attachment of glutamate to tRNA(Glu) in a two-step reaction: glutamate is first activated by ATP to form Glu-AMP and then transferred to the acceptor end of tRNA(Glu). The chain is Glutamate--tRNA ligase from Acinetobacter baumannii (strain SDF).